Here is a 248-residue protein sequence, read N- to C-terminus: Mannose-binding protein C (248 aa).

Positions 1-20 are cleaved as a signal peptide; the sequence is MSLFPSLPLLLLSMVAASYS. The Collagen-like domain occupies 42-99; it reads GINGFPGKDGRDGTKGEKGEPGQGLRGLQGPPGKLGPPGNPGPSGSPGAKGQKGDPGA. The disordered stretch occupies residues 43–112; that stretch reads INGFPGKDGR…CDSSLANPER (70 aa). Pro47 carries the post-translational modification 4-hydroxyproline. Residues 49-61 are compositionally biased toward basic and acidic residues; sequence KDGRDGTKGEKGE. 4-hydroxyproline is present on residues Pro73, Pro79, Pro82, and Pro88. Residues 112-130 adopt a coiled-coil conformation; that stretch reads RKTLQTEINRIKKWVTFSL. The C-type lectin domain occupies 134-245; sequence VGKKLFLTNG…CSSSHLVICE (112 aa). 2 disulfide bridges follow: Cys155/Cys244 and Cys222/Cys236.

As to quaternary structure, oligomeric complex of 3 or more homotrimers. Interacts with MASP1 and MASP2. Interacts with MEP1A and MEP1B and may inhibit their catalytic activity. Post-translationally, hydroxylation on proline residues within the sequence motif, GXPG, is most likely to be 4-hydroxy as this fits the requirement for 4-hydroxylation in vertebrates.

It localises to the secreted. In terms of biological role, calcium-dependent lectin involved in innate immune defense. Binds mannose, fucose and N-acetylglucosamine on different microorganisms and activates the lectin complement pathway. Binds to late apoptotic cells, as well as to apoptotic blebs and to necrotic cells, but not to early apoptotic cells, facilitating their uptake by macrophages. The chain is Mannose-binding protein C (MBL2) from Callithrix jacchus (White-tufted-ear marmoset).